Here is a 206-residue protein sequence, read N- to C-terminus: Cytochrome c biogenesis ATP-binding export protein CcmA (206 aa).

An ABC transporter domain is found at 4-205; sequence LEGIDLTCIR…AGAAIQRLQL (202 aa). An ATP-binding site is contributed by 36-43; that stretch reads GPNGSGKT.

It belongs to the ABC transporter superfamily. CcmA exporter (TC 3.A.1.107) family. As to quaternary structure, the complex is composed of two ATP-binding proteins (CcmA) and two transmembrane proteins (CcmB).

It localises to the cell inner membrane. The enzyme catalyses heme b(in) + ATP + H2O = heme b(out) + ADP + phosphate + H(+). Part of the ABC transporter complex CcmAB involved in the biogenesis of c-type cytochromes; once thought to export heme, this seems not to be the case, but its exact role is uncertain. Responsible for energy coupling to the transport system. The polypeptide is Cytochrome c biogenesis ATP-binding export protein CcmA (Nitrosospira multiformis (strain ATCC 25196 / NCIMB 11849 / C 71)).